The sequence spans 212 residues: Ribosomal RNA small subunit methyltransferase G (212 aa).

S-adenosyl-L-methionine contacts are provided by residues glycine 76, methionine 81, 127–128, and arginine 145; that span reads VE.

The protein belongs to the methyltransferase superfamily. RNA methyltransferase RsmG family.

The protein resides in the cytoplasm. The catalysed reaction is guanosine(527) in 16S rRNA + S-adenosyl-L-methionine = N(7)-methylguanosine(527) in 16S rRNA + S-adenosyl-L-homocysteine. Functionally, specifically methylates the N7 position of guanine in position 527 of 16S rRNA. The chain is Ribosomal RNA small subunit methyltransferase G from Acinetobacter baylyi (strain ATCC 33305 / BD413 / ADP1).